The following is a 230-amino-acid chain: NADH dehydrogenase [ubiquinone] iron-sulfur protein 8, mitochondrial (230 aa).

The N-terminal 42 residues, 1–42 (MAAILARKSLSALRSRQLVLAGQAWQQGANTSNGTLLGTRTF), are a transit peptide targeting the mitochondrion. 2 4Fe-4S ferredoxin-type domains span residues 122–151 (RRYPTGEERCIACKLCEAICPAQAITIEAE) and 161–190 (TRYDIDMTKCIYCGFCQEACPVDAIVEGPN). 8 residues coordinate [4Fe-4S] cluster: Cys131, Cys134, Cys137, Cys141, Cys170, Cys173, Cys176, and Cys180.

The protein belongs to the complex I 23 kDa subunit family. As to quaternary structure, complex I is composed of about 45 different subunits. This is a component of the iron-sulfur (IP) fragment of the enzyme. [4Fe-4S] cluster is required as a cofactor.

Its subcellular location is the mitochondrion. The catalysed reaction is a ubiquinone + NADH + 5 H(+)(in) = a ubiquinol + NAD(+) + 4 H(+)(out). Core subunit of the mitochondrial membrane respiratory chain NADH dehydrogenase (Complex I) that is believed to belong to the minimal assembly required for catalysis. Complex I functions in the transfer of electrons from NADH to the respiratory chain. The immediate electron acceptor for the enzyme is believed to be ubiquinone. May donate electrons to ubiquinone. This chain is NADH dehydrogenase [ubiquinone] iron-sulfur protein 8, mitochondrial, found in Nicotiana tabacum (Common tobacco).